Here is a 97-residue protein sequence, read N- to C-terminus: UPF0235 protein APL_1380 (97 aa).

This sequence belongs to the UPF0235 family.

This chain is UPF0235 protein APL_1380, found in Actinobacillus pleuropneumoniae serotype 5b (strain L20).